We begin with the raw amino-acid sequence, 1564 residues long: Superkiller complex protein 3 (1564 aa).

Ser2 bears the N-acetylserine mark. 20 TPR repeats span residues 6–39, 40–73, 272–305, 307–339, 386–419, 420–453, 455–492, 493–527, 564–597, 598–631, 633–665, 679–713, 790–824, 826–860, 861–894, 980–1013, 1020–1054, 1056–1084, 1326–1359, and 1400–1433; these read VKTA…EKNN, YNAW…EPDQ, GPGL…SPVC, SGWY…VDNL, PGLL…YPDL, AEVH…DTEV, EYHY…DTYM, GKVF…DDTD, KWAW…DPKD, FNCW…NPES, YSVF…KEDY, MAKA…RADV, AQHL…DSNN, LYWN…EQIN, AVAW…DPSY, APAF…LQTA, NVAI…LEDI, GFAL…VESE, KWSL…NPDQ, and VPAW…ASQR.

The protein belongs to the SKI3 family. In terms of assembly, component of the SKI complex which consists of SKIC2, SKIC3 and SKIC8. Interacts with PAF1. In terms of tissue distribution, widely expressed with the highest levels observed in vascular tissues, lymph node, pituitary, lung and intestine. Not expressed in the liver.

It is found in the cytoplasm. The protein localises to the nucleus. Functionally, component of the SKI complex, a multiprotein complex that assists the RNA-degrading exosome during the mRNA decay and quality-control pathways. The SKI complex catalyzes mRNA extraction from 80S ribosomal complexes in the 3'-5' direction and channels mRNA to the cytosolic exosome for degradation. SKI-mediated extraction of mRNA from stalled ribosomes allow binding of the Pelota-HBS1L complex and subsequent ribosome disassembly by ABCE1 for ribosome recycling. In the nucleus, the SKI complex associates with transcriptionally active genes in a manner dependent on PAF1 complex (PAF1C). The polypeptide is Superkiller complex protein 3 (Homo sapiens (Human)).